We begin with the raw amino-acid sequence, 60 residues long: Snake venom metalloproteinase bothrojaractivase (60 aa).

The Peptidase M12B domain occupies 1-60 (RYIELAVVADHGMFTKYRVHELVNTVNGFFRSKQDLIKVQKDKTLTSFGEWRERDLLPRI). Glu4 lines the Ca(2+) pocket.

It belongs to the venom metalloproteinase (M12B) family. P-I subfamily. In terms of assembly, monomer. Zn(2+) serves as cofactor. As to expression, expressed by the venom gland.

The protein localises to the secreted. With respect to regulation, completely inhibited by EDTA and EGTA. Partially inhibited by serine proteinase inhibitors PMSF and benzamidine. Not inhibited by cysteine proteinase inhibitors mercury ions and E-64. Is active without cofactors, although the presence of low concentrations of calcium and zinc ions enhanced its ability to convert prothrombin (F2) into active thrombin. Functionally, prothrombin (F2) activator that is cofactor-independent. Also has fibrinolytic and fibrinogenolytic activity. It degrades the Aalpha-chain and more slowly the Bbeta-chain of fibrin and fibrinogen, while the gamma-chain is only partially and slowly affected. A dose-dependent procoagulant activity is shown in human plasma. In Bothrops jararaca (Jararaca), this protein is Snake venom metalloproteinase bothrojaractivase.